The primary structure comprises 251 residues: GTP cyclohydrolase 1 type 2 homolog (251 aa).

A divalent metal cation-binding residues include H64, H65, D102, H219, and E223.

This sequence belongs to the GTP cyclohydrolase I type 2/NIF3 family. In terms of assembly, homohexamer.

The sequence is that of GTP cyclohydrolase 1 type 2 homolog from Chlamydia trachomatis serovar D (strain ATCC VR-885 / DSM 19411 / UW-3/Cx).